A 194-amino-acid polypeptide reads, in one-letter code: MVKSTTRKRTTLDEWDDVWLYLLVFGCLSVLVLVLVHRKLTRQKGTWSRGLRLDHLYRYSPADPITTGGGGKTTDSRGEVECRRFLETTFRVPFPKARPAFLRNPITGNNLEIDCFNPTIGLGVEYNGKQHYAFNDFFHRNKEAAMNQQYRDELKRRMCHENGVVLIEVPYTIKLSDIGPFLYARLKNLGFIAP.

The helical transmembrane segment at 17 to 37 (DVWLYLLVFGCLSVLVLVLVH) threads the bilayer.

This sequence belongs to the IIV-6 307L family.

It is found in the membrane. This is an uncharacterized protein from Invertebrate iridescent virus 3 (IIV-3).